We begin with the raw amino-acid sequence, 388 residues long: Chorismate synthase (388 aa).

2 residues coordinate NADP(+): arginine 39 and arginine 45. FMN is bound by residues 130 to 132 (RSS), 251 to 252 (NA), alanine 296, 311 to 315 (KPIPT), and arginine 337.

Belongs to the chorismate synthase family. As to quaternary structure, homotetramer. It depends on FMNH2 as a cofactor.

The catalysed reaction is 5-O-(1-carboxyvinyl)-3-phosphoshikimate = chorismate + phosphate. It participates in metabolic intermediate biosynthesis; chorismate biosynthesis; chorismate from D-erythrose 4-phosphate and phosphoenolpyruvate: step 7/7. Its function is as follows. Catalyzes the anti-1,4-elimination of the C-3 phosphate and the C-6 proR hydrogen from 5-enolpyruvylshikimate-3-phosphate (EPSP) to yield chorismate, which is the branch point compound that serves as the starting substrate for the three terminal pathways of aromatic amino acid biosynthesis. This reaction introduces a second double bond into the aromatic ring system. The chain is Chorismate synthase from Streptococcus equi subsp. zooepidemicus (strain H70).